A 366-amino-acid chain; its full sequence is Prostaglandin F2-alpha receptor (366 aa).

The Extracellular portion of the chain corresponds to 1-31 (MSINSSKQPASSAAGLIANTTCQTENRLSVF). N-linked (GlcNAc...) asparagine glycans are attached at residues Asn4 and Asn19. A helical transmembrane segment spans residues 32–55 (FSIIFMTVGIVSNSLAIAILMKAY). At 56–69 (QRFRRKSKASFLLL) the chain is on the cytoplasmic side. A helical membrane pass occupies residues 70–90 (ASGLVITDFFGHLINGGIAVF). Residues 91–109 (VYASDKDWIRFDQSNILCS) lie on the Extracellular side of the membrane. Cys108 and Cys186 are oxidised to a cystine. Residues 110-131 (VFGISMVFSGLCPLFLGSTMAI) traverse the membrane as a helical segment. Over 132–152 (ERCIGVTNPLFHSTKITSKHV) the chain is Cytoplasmic. Residues 153-175 (KMILSGVCMFAVFVALLPILGHR) form a helical membrane-spanning segment. Topologically, residues 176–198 (DYQIQASRTWCFYNTEHIEDWED) are extracellular. Residues 199–224 (RFYLLFFSSLGLLALGISFSCNAVTG) form a helical membrane-spanning segment. Over 225–250 (VTLLRVKFRSQQHRQGRSHHLEMVIQ) the chain is Cytoplasmic. The helical transmembrane segment at 251-267 (LLAIMCVSCVCWSPFLV) threads the bilayer. Residues 268–285 (TMANIAINGNNSPVTCET) are Extracellular-facing. A helical membrane pass occupies residues 286–307 (TLFALRMATWNQILDPWVYILL). The Cytoplasmic portion of the chain corresponds to 308–366 (RKAVLRNLYKLASRCCGVNIISLHIWELSSIKNSLKVAAISESPAAEKENQQASSEAGL).

This sequence belongs to the G-protein coupled receptor 1 family. In terms of tissue distribution, highest expression in pregnant ovary. Also found in a low extent in the kidney. In the brain, expressed in astrocytes and oligodendrocytes, and meningeal fibroblasts, but not in migroglia cells.

It is found in the cell membrane. Its function is as follows. Receptor for prostaglandin F2-alpha (PGF2-alpha). The activity of this receptor is mediated by G proteins which activate a phosphatidylinositol-calcium second messenger system. Initiates luteolysis in the corpus luteum. The sequence is that of Prostaglandin F2-alpha receptor (Ptgfr) from Rattus norvegicus (Rat).